Consider the following 316-residue polypeptide: Probable cell division protein WhiA (316 aa).

Residues 275–309 constitute a DNA-binding region (H-T-H motif); the sequence is TLKELGEMVSGGKISKSGINHRLRKIDEIAEKLRA.

The protein belongs to the WhiA family.

Its function is as follows. Involved in cell division and chromosome segregation. This is Probable cell division protein WhiA from Bacillus cytotoxicus (strain DSM 22905 / CIP 110041 / 391-98 / NVH 391-98).